Reading from the N-terminus, the 302-residue chain is MFWFKNVMIYRLTSPLSLESSSLEEQLRQTKFSPCSQSDISKFGWSSPLSGSELLHFSQGKQFLLVSHKEDKLLPTNVIKKETEERIAVLEEKEARKLKKTEKQAIKDDVVAMLLPRAFSKHQFTAIWLDLDAQLVYVDAGSSKRAEDTLALLRKTLGSLPVVPISFALLPSEVMTNWIAKGHTPNWLSLLEEAELKSFDTDSVIRCKRQDLESEEIAQHLQAGKFVTKLAIDWENHFSCVLNEDATLSRVKFADEVREKNDDILKEDIAQRFDADFLLMTEELKLFTQKMIEEFGGIKERI.

Belongs to the RdgC family.

It is found in the cytoplasm. Its subcellular location is the nucleoid. Functionally, may be involved in recombination. In Actinobacillus pleuropneumoniae serotype 7 (strain AP76), this protein is Recombination-associated protein RdgC.